The sequence spans 366 residues: MSGNTFGHLFTVTSFGESHGPAIGCVVDGCPPGLAICEADIQRELDRRKPGTSRHVTQRREPDTVEILSGVFEGKTTGTPIALLIRNQDQRSKDYGNIADTFRPGHADYTYWHKYGIRDPRGGGRSSARETAVRVAAGAIAKKWLSERFGIVVRGHLTQIGDIDIPFTSWDLVDTNPFFAADTSRLDELEAYMDSIRKSCDSIGARLRVVAENVPVGWGEPVFDRLDADIAYAMMGINAVKGVEIGAGFGCVTQRGSEHGDELTPEGFVSNHAGGILGGISTGQHIEVSMAIKPTSSIARPRRSIDRQGQPVNMETHGRHDPCVGIRATPIAEAMLALVLIDHALRHRAQCGDVRVETPQIAGRVG.

NADP(+) is bound by residues Arg48 and Arg54. Residues 125 to 127 (RSS), 238 to 239 (NA), Gly278, 293 to 297 (KPTSS), and Arg319 each bind FMN.

The protein belongs to the chorismate synthase family. As to quaternary structure, homotetramer. FMNH2 is required as a cofactor.

The catalysed reaction is 5-O-(1-carboxyvinyl)-3-phosphoshikimate = chorismate + phosphate. It functions in the pathway metabolic intermediate biosynthesis; chorismate biosynthesis; chorismate from D-erythrose 4-phosphate and phosphoenolpyruvate: step 7/7. In terms of biological role, catalyzes the anti-1,4-elimination of the C-3 phosphate and the C-6 proR hydrogen from 5-enolpyruvylshikimate-3-phosphate (EPSP) to yield chorismate, which is the branch point compound that serves as the starting substrate for the three terminal pathways of aromatic amino acid biosynthesis. This reaction introduces a second double bond into the aromatic ring system. In Laribacter hongkongensis (strain HLHK9), this protein is Chorismate synthase.